A 184-amino-acid chain; its full sequence is Urease accessory protein UreE (184 aa).

A disordered region spans residues Glu147 to Arg184. Basic and acidic residues predominate over residues His157–His171.

It belongs to the UreE family.

Its subcellular location is the cytoplasm. Its function is as follows. Involved in urease metallocenter assembly. Binds nickel. Probably functions as a nickel donor during metallocenter assembly. This is Urease accessory protein UreE from Burkholderia mallei (strain ATCC 23344).